Reading from the N-terminus, the 162-residue chain is Protein snakeskin (162 aa).

The Cytoplasmic portion of the chain corresponds to 2-6; it reads VSVET. The chain crosses the membrane as a helical span at residues 7–27; it reads VGSIFIKALKLIINLVIIFLY. Over 28 to 53 the chain is Extracellular; that stretch reads RWGDGGEFLGIGGTWNLNEEKSADAE. Residues 54-74 traverse the membrane as a helical segment; sequence IVASGVMVGFLIYTGCHTIAF. Residues 75–88 are Cytoplasmic-facing; it reads AFGTTKHKGELCDT. A helical transmembrane segment spans residues 89-109; that stretch reads IMNVVGCIMWIAVGGVALHYW. Over 110 to 128 the chain is Extracellular; sequence KGYMSDEGFLYVNSERQVG. A helical membrane pass occupies residues 129–149; the sequence is IAMGSLCVIEGALYLLDTVLA. Topologically, residues 150–162 are cytoplasmic; that stretch reads CIHYSKGDTDYTQ.

Forms a complex with Tsp2A and mesh. Interacts with mesh; the interaction may be necessary for the localization of both proteins to the cell apicolateral region.

It is found in the apicolateral cell membrane. Its subcellular location is the cell junction. It localises to the septate junction. Required for assembly of smooth septate junctions (sSJs), together with mesh and Tsp2A. May be important for barrier function of the midgut epithelium. The polypeptide is Protein snakeskin (Drosophila melanogaster (Fruit fly)).